The chain runs to 385 residues: Galactokinase (385 aa).

Residue 34 to 37 (EHTD) participates in substrate binding. Position 124–130 (124–130 (SSGLSSS)) interacts with ATP. S130 and E162 together coordinate Mg(2+). D174 (proton acceptor) is an active-site residue. Y223 serves as a coordination point for substrate.

The protein belongs to the GHMP kinase family. GalK subfamily.

The protein resides in the cytoplasm. It carries out the reaction alpha-D-galactose + ATP = alpha-D-galactose 1-phosphate + ADP + H(+). Its pathway is carbohydrate metabolism; galactose metabolism. Catalyzes the transfer of the gamma-phosphate of ATP to D-galactose to form alpha-D-galactose-1-phosphate (Gal-1-P). This chain is Galactokinase, found in Actinobacillus succinogenes (strain ATCC 55618 / DSM 22257 / CCUG 43843 / 130Z).